We begin with the raw amino-acid sequence, 1033 residues long: Collagen alpha-2(I) chain (1033 aa).

The tract at residues S1–A1033 is disordered. Low complexity-rich tracts occupy residues L25–P71, S154–P175, and P221–P242. The segment covering G276–G285 has biased composition (gly residues). Low complexity predominate over residues S286–S296. Gly residues predominate over residues G318 to G327. Low complexity-rich tracts occupy residues P340–S356 and L391–A410. Gly residues predominate over residues G459 to G468. Composition is skewed to low complexity over residues P519 to P528 and E540 to A550. Positions G551 to G560 are enriched in gly residues. 2 stretches are compositionally biased toward low complexity: residues V583 to S627 and V634 to A654. The span at K655 to K664 shows a compositional bias: basic and acidic residues. A compositionally biased stretch (low complexity) spans P672–A682. Residues G692–G701 show a composition bias toward gly residues. The span at T703 to T712 shows a compositional bias: low complexity. Gly residues predominate over residues G749–G758. 2 stretches are compositionally biased toward low complexity: residues S766–P793 and L801–P811. The span at G812–G834 shows a compositional bias: gly residues. Over residues A873–P909 the composition is skewed to low complexity. Residues R919–P930 are compositionally biased toward basic and acidic residues. The span at S1003–P1015 shows a compositional bias: pro residues.

It belongs to the fibrillar collagen family. As to quaternary structure, trimers of one alpha 2(I) and two alpha 1(I) chains. Interacts (via C-terminus) with TMEM131 (via PapD-L domain); the interaction is direct and is involved in assembly and TRAPPIII ER-to-Golgi transport complex-dependent secretion of collagen. Post-translationally, prolines at the third position of the tripeptide repeating unit (G-X-Y) are hydroxylated in some or all of the chains. In terms of tissue distribution, expressed in bone.

The protein localises to the secreted. It localises to the extracellular space. Its subcellular location is the extracellular matrix. Functionally, type I collagen is a member of group I collagen (fibrillar forming collagen). The polypeptide is Collagen alpha-2(I) chain (Mylodon darwinii (Giant ground sloth)).